We begin with the raw amino-acid sequence, 547 residues long: CTP synthase (547 aa).

The interval 1 to 265 is amidoligase domain; it reads MTKFVFVTGG…DRIVCEKLAL (265 aa). Serine 13 is a binding site for CTP. Serine 13 is a binding site for UTP. Residues 14 to 19 and aspartate 71 contribute to the ATP site; that span reads SLGKGI. Aspartate 71 and glutamate 139 together coordinate Mg(2+). CTP contacts are provided by residues 146–148, 186–191, and lysine 222; these read DIE and KTKPTQ. UTP is bound by residues 186 to 191 and lysine 222; that span reads KTKPTQ. The 253-residue stretch at 290-542 folds into the Glutamine amidotransferase type-1 domain; the sequence is TIGMVGKYVD…IKAALAHKHA (253 aa). L-glutamine is bound at residue glycine 351. The active-site Nucleophile; for glutamine hydrolysis is the cysteine 378. L-glutamine-binding positions include 379–382, glutamate 402, and arginine 468; that span reads LGMQ. Catalysis depends on residues histidine 515 and glutamate 517.

The protein belongs to the CTP synthase family. Homotetramer.

The enzyme catalyses UTP + L-glutamine + ATP + H2O = CTP + L-glutamate + ADP + phosphate + 2 H(+). The catalysed reaction is L-glutamine + H2O = L-glutamate + NH4(+). It catalyses the reaction UTP + NH4(+) + ATP = CTP + ADP + phosphate + 2 H(+). Its pathway is pyrimidine metabolism; CTP biosynthesis via de novo pathway; CTP from UDP: step 2/2. With respect to regulation, allosterically activated by GTP, when glutamine is the substrate; GTP has no effect on the reaction when ammonia is the substrate. The allosteric effector GTP functions by stabilizing the protein conformation that binds the tetrahedral intermediate(s) formed during glutamine hydrolysis. Inhibited by the product CTP, via allosteric rather than competitive inhibition. Catalyzes the ATP-dependent amination of UTP to CTP with either L-glutamine or ammonia as the source of nitrogen. Regulates intracellular CTP levels through interactions with the four ribonucleotide triphosphates. In Janthinobacterium sp. (strain Marseille) (Minibacterium massiliensis), this protein is CTP synthase.